The sequence spans 229 residues: ATP-dependent Clp protease proteolytic subunit (229 aa).

The active-site Nucleophile is serine 101. Histidine 126 is a catalytic residue.

Belongs to the peptidase S14 family. As to quaternary structure, component of the chloroplastic Clp protease core complex.

It localises to the plastid. The protein resides in the chloroplast stroma. The enzyme catalyses Hydrolysis of proteins to small peptides in the presence of ATP and magnesium. alpha-casein is the usual test substrate. In the absence of ATP, only oligopeptides shorter than five residues are hydrolyzed (such as succinyl-Leu-Tyr-|-NHMec, and Leu-Tyr-Leu-|-Tyr-Trp, in which cleavage of the -Tyr-|-Leu- and -Tyr-|-Trp bonds also occurs).. Functionally, cleaves peptides in various proteins in a process that requires ATP hydrolysis. Has a chymotrypsin-like activity. Plays a major role in the degradation of misfolded proteins. This is ATP-dependent Clp protease proteolytic subunit from Mesostigma viride (Green alga).